Reading from the N-terminus, the 56-residue chain is Mitoregulin (56 aa).

At Ala2–Leu9 the chain is on the mitochondrial matrix side. A helical membrane pass occupies residues Gln10 to Ala27. Residues Asn28–Ala56 lie on the Mitochondrial intermembrane side of the membrane.

This sequence belongs to the mitoregulin family. In terms of assembly, interacts with mitochondrial trifunctional enzyme, a heterotetrameric complex composed of 2 HADHA subunits and 2 HADHB subunits. Interacts with cytochrome b5 reductase CYB5R3; the interaction is required to maintain cellular lipid composition and leads to stimulation of mitochondrial respiratory complex I activity. Interacts with ATP synthase subunit ATP5F1B/ATP5B. As to expression, enriched in heart and skeletal muscle (at protein level). Also enriched in adipose tissue with lower levels detected in liver, pancreas and brain (at protein level). Higher levels in differentiated myotubes than in satellite cells.

It is found in the mitochondrion inner membrane. Functionally, positively regulates mitochondrial complex assembly and/or stability. Increases mitochondrial membrane potential while decreasing mitochondrial reactive oxygen species. Increases mitochondrial respiration rate. Increased mitochondrial respiratory activity promotes myogenic differentiation which facilitates muscle growth and regeneration. Increases mitochondrial calcium retention capacity. Plays a role in maintenance of cellular lipid composition through its interaction with cytochrome b5 reductase CYB5R3 which is required for mitochondrial respiratory complex I activity. Interacts with the mitochondrial trifunctional enzyme complex (MTE) and enhances fatty acid beta-oxidation. Not required for MTE formation or stability. Modulates triglyceride clearance in adipocytes through its role in regulating fatty acid beta-oxidation and lipolysis. In Mus musculus (Mouse), this protein is Mitoregulin.